A 132-amino-acid polypeptide reads, in one-letter code: MSMSDPLGDMLTRIRNALARKKGKLVTPASKLRACVLDVLQSEGYIRGYNQVDLGDGKSEIEIELKYFEGLAAIRELSRVSKPGRRVYVSAKSLPQVANGLGVSILSTPKGIMADHEAREQNVGGELLCRVF.

This sequence belongs to the universal ribosomal protein uS8 family. Part of the 30S ribosomal subunit. Contacts proteins S5 and S12.

One of the primary rRNA binding proteins, it binds directly to 16S rRNA central domain where it helps coordinate assembly of the platform of the 30S subunit. This Bartonella quintana (strain Toulouse) (Rochalimaea quintana) protein is Small ribosomal subunit protein uS8.